Here is a 196-residue protein sequence, read N- to C-terminus: Large ribosomal subunit protein eL15 (196 aa).

Positions 155–196 (THRGRAERGLTSAGKKGRGQRRKGKGTEKNYPSVQAHDRRGK) are disordered. Residues 169-178 (KKGRGQRRKG) show a composition bias toward basic residues.

Belongs to the eukaryotic ribosomal protein eL15 family.

The polypeptide is Large ribosomal subunit protein eL15 (Methanocella arvoryzae (strain DSM 22066 / NBRC 105507 / MRE50)).